We begin with the raw amino-acid sequence, 101 residues long: MAKKSMIQRELKREKLVAKYAQKRAEFKAIILDINSTEEQIWEAQIKLQKLPVNSSASRVQRRCKVTGRPHAVYRKFGLCRNKLREYAMAGDVPGLKKASW.

This sequence belongs to the universal ribosomal protein uS14 family. Part of the 30S ribosomal subunit. Contacts proteins S3 and S10.

Its function is as follows. Binds 16S rRNA, required for the assembly of 30S particles and may also be responsible for determining the conformation of the 16S rRNA at the A site. In Francisella tularensis subsp. tularensis (strain FSC 198), this protein is Small ribosomal subunit protein uS14.